Reading from the N-terminus, the 377-residue chain is Carbamoyl phosphate synthase small chain (377 aa).

Residues 1 to 186 (MSTPALLVLA…LGKGFVTPDE (186 aa)) are CPSase. Residues S47, G238, and G240 each contribute to the L-glutamine site. The 188-residue stretch at 190–377 (HVVAYDFGVK…IGNMKAAKRA (188 aa)) folds into the Glutamine amidotransferase type-1 domain. The active-site Nucleophile is C266. Residues L267, Q270, N308, G310, and F311 each coordinate L-glutamine. Active-site residues include H350 and E352.

This sequence belongs to the CarA family. In terms of assembly, composed of two chains; the small (or glutamine) chain promotes the hydrolysis of glutamine to ammonia, which is used by the large (or ammonia) chain to synthesize carbamoyl phosphate. Tetramer of heterodimers (alpha,beta)4.

It carries out the reaction hydrogencarbonate + L-glutamine + 2 ATP + H2O = carbamoyl phosphate + L-glutamate + 2 ADP + phosphate + 2 H(+). The enzyme catalyses L-glutamine + H2O = L-glutamate + NH4(+). Its pathway is amino-acid biosynthesis; L-arginine biosynthesis; carbamoyl phosphate from bicarbonate: step 1/1. The protein operates within pyrimidine metabolism; UMP biosynthesis via de novo pathway; (S)-dihydroorotate from bicarbonate: step 1/3. In terms of biological role, small subunit of the glutamine-dependent carbamoyl phosphate synthetase (CPSase). CPSase catalyzes the formation of carbamoyl phosphate from the ammonia moiety of glutamine, carbonate, and phosphate donated by ATP, constituting the first step of 2 biosynthetic pathways, one leading to arginine and/or urea and the other to pyrimidine nucleotides. The small subunit (glutamine amidotransferase) binds and cleaves glutamine to supply the large subunit with the substrate ammonia. The chain is Carbamoyl phosphate synthase small chain from Neisseria meningitidis serogroup B (strain ATCC BAA-335 / MC58).